The chain runs to 768 residues: MDVNEVEENFFAPGDAKLHGKMCNALSVIYCKIMSIFPSLEAARPRSKSGIQALCSLHVVLEKVKNILRHCTESSKLYLAITGDSVVLKFEKAKSSLTDSLRRVEDIVQQSIGSQLLEILMELENTEFSLDPAEKEIGDQIIGLLQQGGNFESSSDNNELEVFHQAATRLGITSSRAALTERRCLKKLIERARMEDDKRKESIVAYLLHLMRKYSKLFRSEIWDDNDSQGSSSLPCSPTIQGSIDDAHGRAFDRQLSKLSSFNFRSCNNNRRSSQMSVPPEELRCPISLQLMYDPVIIASGQTYERICIEKWFSDGHNTCPKTHQQLSHLCLTPNYCVKALISSWCEQNGVQVPDGPPESLDLNYWRLALSVSESTDTRSAKRVGSCKLKDVKVVPLEESGTIKEEACESEYQEDQVTLVERCTELLTTLTDVDTLRKKCRVVEQIRVLLKDDEEARILMGENGCVEALLQFLGSALNENNASAQKVGAMALFNLAVDNNRNKELMLASGIIPLLEEMLCNPHSHGSVTAIYLNLSCLEEAKPVIGSSLAVPFMVNLLWTETEVQCKVDALHSLFHLSTYPPNIPCLLSADLVNALQSLTISDEQRWTEKSLAVLLNLVLNEAGKDEMVSAPSLVSNLCTILDTGEPNEQEQAVSLLLILCNHSEICSEMVLQEGVIPSLVSISVNGTQRGRERAQKLLTLFRELRQRDQTHLTEPQHTEVTSPEDGFSVASAAVTETKPQCKSASRKKMGRAFSFLWKSKSFSVYQC.

Positions 278-352 (VPPEELRCPI…SSWCEQNGVQ (75 aa)) constitute a U-box domain. ARM repeat units lie at residues 454-497 (EEAR…NLAV), 500-540 (NRNK…CLEE), 542-579 (KPVI…HLST), 581-620 (PPNI…NLVL), and 623-662 (AGKD…ILCN).

In terms of assembly, binds to SD129.

The enzyme catalyses S-ubiquitinyl-[E2 ubiquitin-conjugating enzyme]-L-cysteine + [acceptor protein]-L-lysine = [E2 ubiquitin-conjugating enzyme]-L-cysteine + N(6)-ubiquitinyl-[acceptor protein]-L-lysine.. It participates in protein modification; protein ubiquitination. Functions as an E3 ubiquitin ligase. This Arabidopsis thaliana (Mouse-ear cress) protein is U-box domain-containing protein 45 (PUB45).